A 121-amino-acid chain; its full sequence is Large ribosomal subunit protein bL12 (121 aa).

Belongs to the bacterial ribosomal protein bL12 family. As to quaternary structure, homodimer. Part of the ribosomal stalk of the 50S ribosomal subunit. Forms a multimeric L10(L12)X complex, where L10 forms an elongated spine to which 2 to 4 L12 dimers bind in a sequential fashion. Binds GTP-bound translation factors.

Functionally, forms part of the ribosomal stalk which helps the ribosome interact with GTP-bound translation factors. Is thus essential for accurate translation. The polypeptide is Large ribosomal subunit protein bL12 (Shewanella piezotolerans (strain WP3 / JCM 13877)).